Here is a 100-residue protein sequence, read N- to C-terminus: MAKVNIKPLEDKILVQANEAETTTASGLVIPDTAKEKPQEGTVVAVGPGRWDEDGEKRIPLDVAEGDTVIYSKYGGTEIKYGGEEYLILSARDVLAVVSK.

The protein belongs to the GroES chaperonin family. Heptamer of 7 subunits arranged in a ring. Interacts with the chaperonin GroEL.

The protein resides in the cytoplasm. Its function is as follows. Together with the chaperonin GroEL, plays an essential role in assisting protein folding. The GroEL-GroES system forms a nano-cage that allows encapsulation of the non-native substrate proteins and provides a physical environment optimized to promote and accelerate protein folding. GroES binds to the apical surface of the GroEL ring, thereby capping the opening of the GroEL channel. The polypeptide is Co-chaperonin GroES (Mycobacterium marinum (strain ATCC BAA-535 / M)).